We begin with the raw amino-acid sequence, 251 residues long: Putative glutathione-independent glyoxalase hsp3105 (251 aa).

Belongs to the peptidase C56 family. HSP31-like subfamily.

The protein resides in the cytoplasm. The protein localises to the nucleus. It carries out the reaction methylglyoxal + H2O = (R)-lactate + H(+). Functionally, may catalyze the conversion of methylglyoxal (MG) to D-lactate in a single glutathione (GSH)-independent step. May play a role in detoxifying endogenously produced glyoxals. Involved in protection against reactive oxygen species (ROS). This Schizosaccharomyces pombe (strain 972 / ATCC 24843) (Fission yeast) protein is Putative glutathione-independent glyoxalase hsp3105.